The primary structure comprises 774 residues: 5-methyltetrahydropteroyltriglutamate--homocysteine methyltransferase (774 aa).

5-methyltetrahydropteroyltri-L-glutamate is bound by residues 24-27 (RELK) and lysine 120. Residues 446–448 (IGS) and glutamate 499 each bind L-homocysteine. L-methionine contacts are provided by residues 446 to 448 (IGS) and glutamate 499. Residue tryptophan 576 coordinates 5-methyltetrahydropteroyltri-L-glutamate. Position 614 (aspartate 614) interacts with L-homocysteine. Aspartate 614 is a binding site for L-methionine. Glutamate 620 provides a ligand contact to 5-methyltetrahydropteroyltri-L-glutamate. Zn(2+)-binding residues include histidine 656, cysteine 658, and glutamate 680. Histidine 709 serves as the catalytic Proton donor. Cysteine 741 is a Zn(2+) binding site.

It belongs to the vitamin-B12 independent methionine synthase family. The cofactor is Zn(2+).

The catalysed reaction is 5-methyltetrahydropteroyltri-L-glutamate + L-homocysteine = tetrahydropteroyltri-L-glutamate + L-methionine. The protein operates within amino-acid biosynthesis; L-methionine biosynthesis via de novo pathway; L-methionine from L-homocysteine (MetE route): step 1/1. In terms of biological role, catalyzes the transfer of a methyl group from 5-methyltetrahydrofolate to homocysteine resulting in methionine formation. The sequence is that of 5-methyltetrahydropteroyltriglutamate--homocysteine methyltransferase from Streptomyces griseus subsp. griseus (strain JCM 4626 / CBS 651.72 / NBRC 13350 / KCC S-0626 / ISP 5235).